The chain runs to 139 residues: Large ribosomal subunit protein bL17 (139 aa).

Belongs to the bacterial ribosomal protein bL17 family. In terms of assembly, part of the 50S ribosomal subunit. Contacts protein L32.

This chain is Large ribosomal subunit protein bL17, found in Cereibacter sphaeroides (strain ATCC 17025 / ATH 2.4.3) (Rhodobacter sphaeroides).